The following is a 188-amino-acid chain: Elongation factor P (188 aa).

Belongs to the elongation factor P family.

It is found in the cytoplasm. The protein operates within protein biosynthesis; polypeptide chain elongation. Its function is as follows. Involved in peptide bond synthesis. Stimulates efficient translation and peptide-bond synthesis on native or reconstituted 70S ribosomes in vitro. Probably functions indirectly by altering the affinity of the ribosome for aminoacyl-tRNA, thus increasing their reactivity as acceptors for peptidyl transferase. This Streptomyces avermitilis (strain ATCC 31267 / DSM 46492 / JCM 5070 / NBRC 14893 / NCIMB 12804 / NRRL 8165 / MA-4680) protein is Elongation factor P.